The following is a 574-amino-acid chain: Developmental and secondary metabolism regulator veA (574 aa).

4 disordered regions span residues Met-1–Thr-22, Glu-39–Pro-60, Arg-255–Lys-500, and Arg-513–Phe-548. Residues Gly-25–Arg-230 form the Velvet domain. The Nuclear localization signal signature appears at Glu-39–Cys-44. 2 stretches are compositionally biased toward pro residues: residues Arg-314–Ala-323 and Pro-330–His-341. 4 stretches are compositionally biased toward polar residues: residues Pro-343–Pro-359, His-385–Glu-394, Tyr-402–Pro-415, and Val-448–Thr-458. Residues Gln-457–Lys-501 form a PEST region. Low complexity-rich tracts occupy residues Pro-459–Ser-474 and Ser-482–Ser-493. Basic and acidic residues-rich tracts occupy residues Arg-513–Pro-525 and Pro-532–Asp-543.

Belongs to the velvet family. VeA subfamily. Component of the heterotrimeric velvet complex composed of laeA, veA and velB; VeA acting as a bridging protein between laeA and velB.

It is found in the nucleus. Its subcellular location is the cytoplasm. In terms of biological role, component of the velvet transcription factor complex that controls sexual/asexual developmental ratio in response to light, promoting sexual development in the darkness while stimulating asexual sporulation under illumination. The velvet complex hat acts as a global regulator for secondary metabolite gene expression. Controls the expression of the aflatoxin gene cluster. Required for the expression of aflR and aflJ. Mediates the coordination of aflatoxigenic vesicles (aflatoxisomes) development with aflatoxin gene expression. Regulates branched chain amino acid and ethanol metabolism and acts as a positive regulator of mitochondrial and peroxisomal beta-oxidation. The chain is Developmental and secondary metabolism regulator veA from Aspergillus parasiticus.